Here is a 982-residue protein sequence, read N- to C-terminus: Serine/threonine-protein kinase ATG1 (982 aa).

The region spanning phenylalanine 19–isoleucine 324 is the Protein kinase domain. Residues isoleucine 25–valine 33 and lysine 48 each bind ATP. The active-site Proton acceptor is aspartate 162. 4 disordered regions span residues aspartate 334 to alanine 506, arginine 813 to glycine 834, proline 898 to alanine 918, and arginine 947 to serine 982. Basic and acidic residues-rich tracts occupy residues aspartate 335 to aspartate 359 and histidine 372 to glutamate 387. The segment covering proline 388–serine 398 has biased composition (low complexity). Residues serine 463–alanine 481 show a composition bias toward polar residues.

This sequence belongs to the protein kinase superfamily. Ser/Thr protein kinase family. APG1/unc-51/ULK1 subfamily. Homodimer. Forms a ternary complex with ATG13 and ATG17. In terms of tissue distribution, uniformly detected in conidia, mycelia and appressoria (at protein level).

The protein resides in the cytoplasm. It localises to the preautophagosomal structure membrane. The catalysed reaction is L-seryl-[protein] + ATP = O-phospho-L-seryl-[protein] + ADP + H(+). It catalyses the reaction L-threonyl-[protein] + ATP = O-phospho-L-threonyl-[protein] + ADP + H(+). Serine/threonine protein kinase involved in the cytoplasm to vacuole transport (Cvt) and found to be essential in autophagy, where it is required for the formation of autophagosomes. Involved in the clearance of protein aggregates which cannot be efficiently cleared by the proteasome. Required for selective autophagic degradation of the nucleus (nucleophagy) as well as for mitophagy which contributes to regulate mitochondrial quantity and quality by eliminating the mitochondria to a basal level to fulfill cellular energy requirements and preventing excess ROS production. Also involved in endoplasmic reticulum-specific autophagic process, in selective removal of ER-associated degradation (ERAD) substrates. Plays a key role in ATG9 and ATG23 cycling through the pre-autophagosomal structure and is necessary to promote ATG18 binding to ATG9 through phosphorylation of ATG9. Catalyzes phosphorylation of ATG4, decreasing the interaction between ATG4 and ATG8 and impairing deconjugation of PE-conjugated forms of ATG8. Autophagy is essential to fungal development, production of appressorium turgor, and pathogenicity in rice blast disease. The protein is Serine/threonine-protein kinase ATG1 of Pyricularia oryzae (strain 70-15 / ATCC MYA-4617 / FGSC 8958) (Rice blast fungus).